The sequence spans 543 residues: CTP synthase (543 aa).

Residues 1-265 are amidoligase domain; sequence MTRYIFVTGG…DDFVVERFGL (265 aa). Residue S13 coordinates CTP. UTP is bound at residue S13. ATP is bound by residues 14 to 19 and D71; that span reads SLGKGI. Mg(2+) contacts are provided by D71 and E139. CTP-binding positions include 146 to 148, 186 to 191, and K222; these read DIE and KTKPTQ. Residues 186 to 191 and K222 contribute to the UTP site; that span reads KTKPTQ. In terms of domain architecture, Glutamine amidotransferase type-1 spans 290 to 541; that stretch reads TIAMVGKYME…VKAALAQHQK (252 aa). L-glutamine is bound at residue G351. Residue C378 is the Nucleophile; for glutamine hydrolysis of the active site. Residues 379–382, E402, and R469 each bind L-glutamine; that span reads LGMQ. Catalysis depends on residues H514 and E516.

Belongs to the CTP synthase family. As to quaternary structure, homotetramer.

It carries out the reaction UTP + L-glutamine + ATP + H2O = CTP + L-glutamate + ADP + phosphate + 2 H(+). The catalysed reaction is L-glutamine + H2O = L-glutamate + NH4(+). The enzyme catalyses UTP + NH4(+) + ATP = CTP + ADP + phosphate + 2 H(+). Its pathway is pyrimidine metabolism; CTP biosynthesis via de novo pathway; CTP from UDP: step 2/2. Allosterically activated by GTP, when glutamine is the substrate; GTP has no effect on the reaction when ammonia is the substrate. The allosteric effector GTP functions by stabilizing the protein conformation that binds the tetrahedral intermediate(s) formed during glutamine hydrolysis. Inhibited by the product CTP, via allosteric rather than competitive inhibition. Functionally, catalyzes the ATP-dependent amination of UTP to CTP with either L-glutamine or ammonia as the source of nitrogen. Regulates intracellular CTP levels through interactions with the four ribonucleotide triphosphates. This Pseudomonas savastanoi pv. phaseolicola (strain 1448A / Race 6) (Pseudomonas syringae pv. phaseolicola (strain 1448A / Race 6)) protein is CTP synthase.